Reading from the N-terminus, the 493-residue chain is Signal recognition particle subunit SRP54 3 (493 aa).

Residues 1–294 are G-domain; it reads MVLADVGGSI…NVEPFVARLL (294 aa). GTP contacts are provided by residues 107–114, 189–193, and 247–250; these read GLQGSGKT, DTSGR, and TKLD. The M-domain stretch occupies residues 295–493; sequence GRGDLPGLID…KMLAGMRGGA (199 aa).

It belongs to the GTP-binding SRP family. SRP54 subfamily. As to quaternary structure, component of a signal recognition particle (SRP) complex that consists of a 7SL RNA molecule of 300 nucleotides and six protein subunits: SRP72, SRP68, SRP54, SRP19, SRP14 and SRP9.

The protein resides in the cytoplasm. It is found in the endoplasmic reticulum. The catalysed reaction is GTP + H2O = GDP + phosphate + H(+). Functionally, component of the signal recognition particle (SRP) complex, a ribonucleoprotein complex that mediates the cotranslational targeting of secretory and membrane proteins to the endoplasmic reticulum (ER). As part of the SRP complex, associates with the SRP receptor (SR) component SRPRA to target secretory proteins to the endoplasmic reticulum membrane. Binds to the signal sequence of presecretory proteins when they emerge from the ribosomes. Displays basal GTPase activity, and stimulates reciprocal GTPase activation of the SR subunit SRPRA. Forms a guanosine 5'-triphosphate (GTP)-dependent complex with the SR subunit SRPRA. SR compaction and GTPase mediated rearrangement of SR drive SRP-mediated cotranslational protein translocation into the ER. Requires the presence of SRP9/SRP14 and/or SRP19 to stably interact with RNA. This is Signal recognition particle subunit SRP54 3 (SRP54-3) from Hordeum vulgare (Barley).